The primary structure comprises 298 residues: tRNA-cytidine(32) 2-sulfurtransferase (298 aa).

The tract at residues 1–26 (MTAVISLPDPPQRASRGPRVAGPGQD) is disordered. Positions 57-62 (SGGKDS) match the PP-loop motif motif. C132, C135, and C223 together coordinate [4Fe-4S] cluster.

This sequence belongs to the TtcA family. Homodimer. It depends on Mg(2+) as a cofactor. Requires [4Fe-4S] cluster as cofactor.

Its subcellular location is the cytoplasm. It carries out the reaction cytidine(32) in tRNA + S-sulfanyl-L-cysteinyl-[cysteine desulfurase] + AH2 + ATP = 2-thiocytidine(32) in tRNA + L-cysteinyl-[cysteine desulfurase] + A + AMP + diphosphate + H(+). The protein operates within tRNA modification. In terms of biological role, catalyzes the ATP-dependent 2-thiolation of cytidine in position 32 of tRNA, to form 2-thiocytidine (s(2)C32). The sulfur atoms are provided by the cysteine/cysteine desulfurase (IscS) system. This Stenotrophomonas maltophilia (strain R551-3) protein is tRNA-cytidine(32) 2-sulfurtransferase.